We begin with the raw amino-acid sequence, 393 residues long: MADRRRRLRPGTLAPVREGVNCRSRCFTKHKNGLKFPTSLHSRQLVFPRKGLDDFRKGCPPCTGLVTQVPVEGFLPQIYHRAPQLAPKKRQIKLLKEADVLSKLSPAQQARKAFLEDVEAHLTPHPLALYLNLEEAMPIELLSKVLEVLDPDRKLEDTWAYCQDTRKGMKEPTKLLKKHSTQVYLGPSKKTSVSNAGQWLYEEKPHKMDLLHENGPRPGLHENGISDIDEEFILKQFDIDYETKPSHDALHTMKLNQVPLELKRSVGLSKLQETEFFQKLGYERKLQKPQNPYKPKWVKMRYGAWYLNPKLWKKQRVDEPLVDPEVSHKAQEENFKKELQEQEELLADLHGTVAFKDFILSRGYRTPRFLENMYIGKECKRACNKTPIKRTQA.

The stretch at 326 to 354 (VSHKAQEENFKKELQEQEELLADLHGTVA) forms a coiled coil.

The protein belongs to the FAM47 family. In terms of assembly, interacts with PRMT5; the interaction is direct. Interacts with WDR77.

Its subcellular location is the nucleus. It is found in the chromosome. The protein localises to the cytoplasm. Functionally, promotes histone methylation by localizing the arginine methyltransferase PRMT5 to chromatin. In Homo sapiens (Human), this protein is Protein FAM47E (FAM47E).